The chain runs to 78 residues: MSDLFSSESPVTLAQARTVAAGYQNVFIENLQPAGHFQIVIRDHRDHDSQLVWRNWNYESGANDALNSYLQSHGLKAS.

This sequence belongs to the UPF0401 family.

The polypeptide is UPF0401 protein YubL (yubL) (Salmonella typhi).